The sequence spans 349 residues: Aldehyde reductase YahK (349 aa).

The Zn(2+) site is built by Cys40, His62, Cys93, Cys96, Cys99, Cys107, and Cys158.

The protein belongs to the zinc-containing alcohol dehydrogenase family. It depends on Zn(2+) as a cofactor.

The enzyme catalyses a primary alcohol + NADP(+) = an aldehyde + NADPH + H(+). In terms of biological role, catalyzes the reduction of a wide range of aldehydes into their corresponding alcohols. Has a strong preference for NADPH over NADH as the electron donor. Cannot use a ketone as substrate. Is a major source of NADPH-dependent aldehyde reductase activity in E.coli. The in vivo functions of YahK has yet to be determined. This is Aldehyde reductase YahK (yahK) from Escherichia coli (strain K12).